A 207-amino-acid polypeptide reads, in one-letter code: Dephospho-CoA kinase (207 aa).

Residues 1–11 show a composition bias toward polar residues; it reads MTRSPAPSSPT. The interval 1–21 is disordered; sequence MTRSPAPSSPTHPRRLGLTGS. The 193-residue stretch at 15 to 207 folds into the DPCK domain; the sequence is RLGLTGSIGA…DAALRQLEIT (193 aa). Residue 23-28 participates in ATP binding; it reads GAGKST.

Belongs to the CoaE family.

It is found in the cytoplasm. The catalysed reaction is 3'-dephospho-CoA + ATP = ADP + CoA + H(+). It participates in cofactor biosynthesis; coenzyme A biosynthesis; CoA from (R)-pantothenate: step 5/5. Catalyzes the phosphorylation of the 3'-hydroxyl group of dephosphocoenzyme A to form coenzyme A. This Deinococcus radiodurans (strain ATCC 13939 / DSM 20539 / JCM 16871 / CCUG 27074 / LMG 4051 / NBRC 15346 / NCIMB 9279 / VKM B-1422 / R1) protein is Dephospho-CoA kinase.